The primary structure comprises 865 residues: Alanine--tRNA ligase (865 aa).

Zn(2+) is bound by residues His554, His558, Cys656, and His660.

Belongs to the class-II aminoacyl-tRNA synthetase family. Zn(2+) serves as cofactor.

It localises to the cytoplasm. It carries out the reaction tRNA(Ala) + L-alanine + ATP = L-alanyl-tRNA(Ala) + AMP + diphosphate. Functionally, catalyzes the attachment of alanine to tRNA(Ala) in a two-step reaction: alanine is first activated by ATP to form Ala-AMP and then transferred to the acceptor end of tRNA(Ala). Also edits incorrectly charged Ser-tRNA(Ala) and Gly-tRNA(Ala) via its editing domain. This Francisella tularensis subsp. tularensis (strain WY96-3418) protein is Alanine--tRNA ligase.